The following is a 118-amino-acid chain: Acidic phospholipase A2 (118 aa).

3 residues coordinate Ca(2+): Tyr-25, Gly-27, and Gly-29. His-45 is a catalytic residue. Asp-46 contributes to the Ca(2+) binding site. The active site involves Asp-86.

This sequence belongs to the phospholipase A2 family. Group II subfamily. D49 sub-subfamily. The cofactor is Ca(2+). In terms of processing, six disulfide bonds are present. In terms of tissue distribution, expressed by the venom gland.

Its subcellular location is the secreted. It carries out the reaction a 1,2-diacyl-sn-glycero-3-phosphocholine + H2O = a 1-acyl-sn-glycero-3-phosphocholine + a fatty acid + H(+). Its function is as follows. PLA2 catalyzes the calcium-dependent hydrolysis of the 2-acyl groups in 3-sn-phosphoglycerides. The sequence is that of Acidic phospholipase A2 from Bitis gabonica (Gaboon adder).